Reading from the N-terminus, the 1052-residue chain is MAKVPITLVMIIAIVSAAADLGCDYGHHRCYIDVTVENSPRQRHLLSDMDITLQCVRPMAKWFYEDKFQLRATLLRLERAQSGNSGNYGCLDSQNRWYNISLVVGHKEPVGNDIASFVKLEDAPALPESDLFFQPLNESRSLKLLQPLPKTVQRTAGGLFQLNCSPMDPDAKGVNISWLHNDTQILGGRGRIKLKRWSLTVGQLQPEDAGSYHCELCVEQDCQRSNPTQLEVISRKHTVPMLKPGYPRNTSIALGDNVSIECLLEDSALEPKITWLHKGNADNIDDLLQRLREQSQLPVDVTRLITRMDEPQVLRLGNVLMEDGGWYICIAENQVGRTVAASYVDLYSPSDTTTVRTTTTTTVASPIPTASTGEDNDDDVENPAAEASGGVGPPVFRKELKRLQHSLSGNTVNLACPVYGKANITWTKDKKPLNRELGVYVQKNWTLRFVEATSEDSGLYNCKVCNAWGCIQFDFSVQINDRTRSAPIIVVPQNQTVKVNGSLVMKCTVYSDLHPTVSWKRVVLKNASLDGLKSVEIQNLNFTVTNDSVVLTLRNVTFDQEGWYTCLASSGLGRSNSSVYLRVVSPLPPLEIYALLHAHPLGFTLAAITIVALFLLGSAFITFMLRRLRREKLLKLRIETVHQWTKKVIIYRPGGEEGSGCSSGDLQMPVIRIEKQRTTVSTTGTGGTDPAQGFNEYEFPLDSNWEIPRQQLSLGSILGEGAFGRVVMAEAEGLPRSPQLAETIVAVKMVKEEHTDTDMASLVREMEVMKMIGKHINIINLLGCCSQGGPLWVIVEYAPHGNLKDFLKQNRPGAPQRRSDSDGYLDDKPLISTQHLGEKELTKFAFQIARGMEYLASRRCIHRDLAARNVLVSDGYVMKIADFGLARDIQDTEYYRKNTNGRLPIKWMAPESLQEKKYDSQSDVWSYGVLLWEIMTYGDQPYPHILSAEELYSYLITGQRMEKPAKCSLNIYVVMRQCWHFESCARPTFAELVESFDGILQQASSNPNDAYLDLSMPMLETPPSSGDEDDGSDTETFRETSPLRYQYTYKFN.

A signal peptide spans 1–19 (MAKVPITLVMIIAIVSAAA). The Extracellular segment spans residues 20 to 600 (DLGCDYGHHR…EIYALLHAHP (581 aa)). Ig-like C2-type domains follow at residues 23 to 117 (CDYG…IASF), 124 to 230 (PALP…PTQL), and 240 to 340 (PMLK…RTVA). Cysteines 30 and 90 form a disulfide. Residues N99, N137, N175, N181, N249, and N257 are each glycosylated (N-linked (GlcNAc...) asparagine). Residues C164 and C217 are joined by a disulfide bond. C262 and C329 form a disulfide bridge. Over residues 358–372 (TTTTTVASPIPTAST) the composition is skewed to low complexity. The disordered stretch occupies residues 358–393 (TTTTTVASPIPTASTGEDNDDDVENPAAEASGGVGP). Ig-like C2-type domains lie at 393 to 478 (PPVF…FSVQ) and 487 to 585 (PIIV…RVVS). An intrachain disulfide couples C416 to C462. 9 N-linked (GlcNAc...) asparagine glycosylation sites follow: N423, N444, N494, N500, N526, N541, N546, N555, and N576. A disulfide bridge links C507 with C566. Residues 601–626 (LGFTLAAITIVALFLLGSAFITFMLR) traverse the membrane as a helical segment. Topologically, residues 627-1052 (RLRREKLLKL…LRYQYTYKFN (426 aa)) are cytoplasmic. In terms of domain architecture, Protein kinase spans 712 to 1000 (LSLGSILGEG…ELVESFDGIL (289 aa)). ATP-binding positions include 718 to 726 (LGEGAFGRV) and K748. D864 (proton acceptor) is an active-site residue. A Phosphotyrosine; by autocatalysis modification is found at Y895. A disordered region spans residues 1017–1038 (PMLETPPSSGDEDDGSDTETFR).

Belongs to the protein kinase superfamily. Tyr protein kinase family. Fibroblast growth factor receptor subfamily. During embryogenesis, expression is seen in mesoderm, endodermal precursor cells, CNS midline cells and trachea and salivary duct ectodermal cells.

Its subcellular location is the membrane. The catalysed reaction is L-tyrosyl-[protein] + ATP = O-phospho-L-tyrosyl-[protein] + ADP + H(+). Its function is as follows. May be required for patterning of muscle precursor cells: generation of mesodermal and endodermal layers, invaginations of various types of cells, and CNS formation. Essential for the ability of the migrating tracheal and midline cells to recognize external guiding cues. This chain is Fibroblast growth factor receptor homolog 2 (btl), found in Drosophila melanogaster (Fruit fly).